The following is a 429-amino-acid chain: Arrestin-related trafficking adapter 10 (429 aa).

It belongs to the ART10 family.

Its subcellular location is the cytoplasm. In terms of biological role, may regulate endocytosis by recruiting RSP5 ubiquitin ligase activity to specific plasma membrane proteins in response to extracellular stimuli. This chain is Arrestin-related trafficking adapter 10 (ART10), found in Lachancea thermotolerans (strain ATCC 56472 / CBS 6340 / NRRL Y-8284) (Yeast).